The following is a 418-amino-acid chain: MKLPAAAGDAIVIGPNAVRLIKSWGEQLCEEIEPHLSNATHAEMLDHHDRFIVRHELAGRGKGWFTNRGRLISILYEHARKLGIDIRLGSRVTKYWEEDGRAGVIVNDRERLAADCVICADGVHSAARAWLTGQVDTQQHSGWANFRAHMTTEQLAKDPEASWVLQGTREKDRVYVWFGDGINLAIMTMKRGQELAWALMHTDKFNAHESWAGGRASIDDALATLSPWPGRLRPSSVIRHTLPEKLVDHALIYRPPLDTWVSAGGRVMLIGDAAHPYFPVVGQGGSQAIEDGVVVATALELAGKENVPLALRIRATLTEENNVLMEAGNSRYPRATVIQLGSSTLQEHLFWPDWEAVAKDPSVFAFPNPEWILGHDCREYTHQVFDTVVRAVRGEGEYIPRNIPADGAYRVEDTYSPE.

Val12 and Arg68 together coordinate FAD. The active site involves Arg147. Asp272 and Gly285 together coordinate FAD.

The protein belongs to the paxM FAD-dependent monooxygenase family.

It localises to the cytoplasm. The protein operates within alkaloid biosynthesis. Functionally, FAD-dependent monooxygenase; part of the gene cluster that mediates the biosynthesis of the antitumor fumiquinazolines that confer a dual-usage capability to defend against phagocytes in the environment and animal hosts. The simplest member is fumiquinazoline F (FQF) with a 6-6-6 tricyclic core derived from anthranilic acid (Ant), tryptophan (Trp), and alanine (Ala). The trimodular NRPS fmqA is responsible for FQF formation. Modules 1, 2 and 3 of fmqA are predicted to activate and load Ant, Trp and Ala, respectively, providing for the assembly of an Ant-Trp-Ala-S-enzyme intermediate that would undergo double cyclization for chain release and generation of the tricyclic 6-6-6 product fumiquinazoline F. The presence of an E domain predicted for module 2 of fmqA is consistent with epimerization of L-Trp to D-Trp during assembly to generate the R-stereocenter at C14 of FQF. The FAD-dependent monooxygenase fmqB and the monomodular NRPS fmqC then maturate FQF to FQA. FmqB oxidizes the 2',3'-double bond of the indole side chain of FQF, and fmqC activates L-Ala as the adenylate, installs it as the pantetheinyl thioester on its carrier protein domain, and acylates the oxidized indole for subsequent intramolecular cyclization to create the 6-5-5-imidazolindolone of FQA. The FAD-linked oxidoreductase fmqD introduces a third layer of scaffold complexity by converting FQA to the spirohemiaminal FQC, presumably by catalyzing the formation of a transient imine within the pyrazinone ring. FQC subsequently converts nonenzymatically to the known cyclic aminal FQD. This is FAD-dependent monooxygenase fmqB from Aspergillus fumigatus (strain ATCC MYA-4609 / CBS 101355 / FGSC A1100 / Af293) (Neosartorya fumigata).